Consider the following 362-residue polypeptide: H-2 class I histocompatibility antigen, D-K alpha chain (362 aa).

The N-terminal stretch at 1–24 (MGAMVPRTLLLLLAAALAPAQTRA) is a signal peptide. Residues 25–114 (GPHSLRYFET…LLRYYNQSEG (90 aa)) form an alpha-1 region. Topologically, residues 25 to 306 (GPHSLRYFET…RWEPPPSTDS (282 aa)) are extracellular. Residue Asn-110 is glycosylated (N-linked (GlcNAc...) asparagine). The alpha-2 stretch occupies residues 115 to 206 (GSHTIQRLSG…ELGNATLLHT (92 aa)). Cys-125 and Cys-188 are joined by a disulfide. Residues Asn-200 and Asn-280 are each glycosylated (N-linked (GlcNAc...) asparagine). The interval 207 to 298 (DSPKAHVTHH…GLPEPLTLRW (92 aa)) is alpha-3. The 89-residue stretch at 209–297 (PKAHVTHHPR…EGLPEPLTLR (89 aa)) folds into the Ig-like C1-type domain. Cys-227 and Cys-283 are joined by a disulfide. Residues 299–306 (EPPPSTDS) form a connecting peptide region. Residues 307–333 (YMVIVAVLGVLGAVAIIGAVVAFVMMM) traverse the membrane as a helical segment. Residues 334–362 (RRNTGGKGGDYTLTPGSQSSEMSLPDCKA) lie on the Cytoplasmic side of the membrane. The tract at residues 340 to 362 (KGGDYTLTPGSQSSEMSLPDCKA) is disordered. A phosphoserine mark is found at Ser-353 and Ser-356.

It belongs to the MHC class I family. Heterodimer of an alpha chain and a beta chain (beta-2-microglobulin). In terms of processing, polyubiquitinated in case of infection by murid herpesvirus 4, by the viral E3 ligase K3 (mK3), leading to target the protein for rapid degradation by the endoplasmic reticulum-associated degradation (ERAD) system. Ubiquitination takes place on lysine, as well as serine and threonine residues present in the cytoplasmic tail. Hydroxylated serine and threonine residues in the cytoplasmic tail are subject to ubiquitination via ester bonds instead of the classical isopeptide linkage. Hydroxylation of residues in the cytoplasmic tail.

Its subcellular location is the membrane. Involved in the presentation of foreign antigens to the immune system. The sequence is that of H-2 class I histocompatibility antigen, D-K alpha chain (H2-D1) from Mus musculus (Mouse).